Reading from the N-terminus, the 171-residue chain is UPF0398 protein SEQ_1788 (171 aa).

This sequence belongs to the UPF0398 family.

The protein is UPF0398 protein SEQ_1788 of Streptococcus equi subsp. equi (strain 4047).